Reading from the N-terminus, the 541-residue chain is Chaperonin GroEL 1 (541 aa).

Residues 29–32 (TIGP), 86–90 (DGTTT), Gly415, 479–481 (NAA), and Asp495 contribute to the ATP site.

The protein belongs to the chaperonin (HSP60) family. In terms of assembly, forms a cylinder of 14 subunits composed of two heptameric rings stacked back-to-back. Interacts with the co-chaperonin GroES.

It localises to the cytoplasm. It catalyses the reaction ATP + H2O + a folded polypeptide = ADP + phosphate + an unfolded polypeptide.. In terms of biological role, together with its co-chaperonin GroES, plays an essential role in assisting protein folding. The GroEL-GroES system forms a nano-cage that allows encapsulation of the non-native substrate proteins and provides a physical environment optimized to promote and accelerate protein folding. This chain is Chaperonin GroEL 1, found in Streptomyces coelicolor (strain ATCC BAA-471 / A3(2) / M145).